Here is a 513-residue protein sequence, read N- to C-terminus: ATP synthase subunit alpha 2 (513 aa).

Residue 169–176 participates in ATP binding; the sequence is GDRQCGKT.

Belongs to the ATPase alpha/beta chains family. As to quaternary structure, F-type ATPases have 2 components, CF(1) - the catalytic core - and CF(0) - the membrane proton channel. CF(1) has five subunits: alpha(3), beta(3), gamma(1), delta(1), epsilon(1). CF(0) has three main subunits: a(1), b(2) and c(9-12). The alpha and beta chains form an alternating ring which encloses part of the gamma chain. CF(1) is attached to CF(0) by a central stalk formed by the gamma and epsilon chains, while a peripheral stalk is formed by the delta and b chains.

The protein localises to the cell inner membrane. The catalysed reaction is ATP + H2O + 4 H(+)(in) = ADP + phosphate + 5 H(+)(out). Produces ATP from ADP in the presence of a proton gradient across the membrane. The alpha chain is a regulatory subunit. In Paraburkholderia xenovorans (strain LB400), this protein is ATP synthase subunit alpha 2.